The sequence spans 169 residues: Ion-translocating oxidoreductase complex subunit B (169 aa).

The segment at 1-23 is hydrophobic; that stretch reads MIISIIIFSILSFILGVIVSLVS. A 4Fe-4S domain is found at 30-89; it reads SNLSLINDIDELLPQMQCAQCGYPGCYAYSQAIVDGNENIYKCIPGGKEVVLKLENLLNK. [4Fe-4S] cluster is bound by residues Cys-47, Cys-50, Cys-55, Cys-72, Cys-116, Cys-119, Cys-122, Cys-126, Cys-146, Cys-149, Cys-152, and Cys-156. 4Fe-4S ferredoxin-type domains are found at residues 107-136 and 137-166; these read SIVE…GTYN and FRHT…KKIM.

It belongs to the 4Fe4S bacterial-type ferredoxin family. RnfB subfamily. As to quaternary structure, the complex is composed of six subunits: RnfA, RnfB, RnfC, RnfD, RnfE and RnfG. The cofactor is [4Fe-4S] cluster.

Its subcellular location is the cell inner membrane. In terms of biological role, part of a membrane-bound complex that couples electron transfer with translocation of ions across the membrane. In Buchnera aphidicola subsp. Baizongia pistaciae (strain Bp), this protein is Ion-translocating oxidoreductase complex subunit B.